A 156-amino-acid polypeptide reads, in one-letter code: Small ribosomal subunit protein uS7 (156 aa).

It belongs to the universal ribosomal protein uS7 family. Part of the 30S ribosomal subunit. Contacts proteins S9 and S11.

Functionally, one of the primary rRNA binding proteins, it binds directly to 16S rRNA where it nucleates assembly of the head domain of the 30S subunit. Is located at the subunit interface close to the decoding center, probably blocks exit of the E-site tRNA. This chain is Small ribosomal subunit protein uS7, found in Sinorhizobium medicae (strain WSM419) (Ensifer medicae).